We begin with the raw amino-acid sequence, 97 residues long: Large ribosomal subunit protein bL27 (97 aa).

Residues 1–10 (MVKLNLSNLQ) show a composition bias toward polar residues. Residues 1-12 (MVKLNLSNLQHF) constitute a propeptide that is removed on maturation. The segment at 1–38 (MVKLNLSNLQHFAHKKGGGSTSNGRDSQAKRLGAKAAD) is disordered.

Belongs to the bacterial ribosomal protein bL27 family. Post-translationally, the N-terminus is cleaved by ribosomal processing cysteine protease Prp.

This is Large ribosomal subunit protein bL27 from Streptococcus equi subsp. zooepidemicus (strain H70).